Reading from the N-terminus, the 1179-residue chain is ATP-dependent helicase/deoxyribonuclease subunit B (1179 aa).

This sequence belongs to the helicase family. AddB/RexB type 2 subfamily. As to quaternary structure, heterodimer of AddA and RexB. Requires Mg(2+) as cofactor.

The heterodimer acts as both an ATP-dependent DNA helicase and an ATP-dependent, dual-direction single-stranded exonuclease. Recognizes the chi site generating a DNA molecule suitable for the initiation of homologous recombination. This subunit has 5' -&gt; 3' nuclease activity but not helicase activity. This Lactobacillus delbrueckii subsp. bulgaricus (strain ATCC 11842 / DSM 20081 / BCRC 10696 / JCM 1002 / NBRC 13953 / NCIMB 11778 / NCTC 12712 / WDCM 00102 / Lb 14) protein is ATP-dependent helicase/deoxyribonuclease subunit B.